Here is a 47-residue protein sequence, read N- to C-terminus: Large ribosomal subunit protein bL27c-2 (47 aa).

It belongs to the bacterial ribosomal protein bL27 family.

It localises to the plastid. It is found in the chloroplast. The sequence is that of Large ribosomal subunit protein bL27c-2 from Cyanidium caldarium (Red alga).